We begin with the raw amino-acid sequence, 153 residues long: D-aminoacyl-tRNA deacylase (153 aa).

The Gly-cisPro motif, important for rejection of L-amino acids signature appears at 142–143 (GP).

It belongs to the DTD family. In terms of assembly, homodimer.

It localises to the cytoplasm. It carries out the reaction glycyl-tRNA(Ala) + H2O = tRNA(Ala) + glycine + H(+). The enzyme catalyses a D-aminoacyl-tRNA + H2O = a tRNA + a D-alpha-amino acid + H(+). An aminoacyl-tRNA editing enzyme that deacylates mischarged D-aminoacyl-tRNAs. Also deacylates mischarged glycyl-tRNA(Ala), protecting cells against glycine mischarging by AlaRS. Acts via tRNA-based rather than protein-based catalysis; rejects L-amino acids rather than detecting D-amino acids in the active site. By recycling D-aminoacyl-tRNA to D-amino acids and free tRNA molecules, this enzyme counteracts the toxicity associated with the formation of D-aminoacyl-tRNA entities in vivo and helps enforce protein L-homochirality. In Cupriavidus taiwanensis (strain DSM 17343 / BCRC 17206 / CCUG 44338 / CIP 107171 / LMG 19424 / R1) (Ralstonia taiwanensis (strain LMG 19424)), this protein is D-aminoacyl-tRNA deacylase.